We begin with the raw amino-acid sequence, 518 residues long: ATP synthase subunit alpha (518 aa).

Residue 169–176 participates in ATP binding; it reads GDRQTGKT.

The protein belongs to the ATPase alpha/beta chains family. In terms of assembly, F-type ATPases have 2 components, CF(1) - the catalytic core - and CF(0) - the membrane proton channel. CF(1) has five subunits: alpha(3), beta(3), gamma(1), delta(1), epsilon(1). CF(0) has three main subunits: a(1), b(2) and c(9-12). The alpha and beta chains form an alternating ring which encloses part of the gamma chain. CF(1) is attached to CF(0) by a central stalk formed by the gamma and epsilon chains, while a peripheral stalk is formed by the delta and b chains.

The protein localises to the cell membrane. It carries out the reaction ATP + H2O + 4 H(+)(in) = ADP + phosphate + 5 H(+)(out). Functionally, produces ATP from ADP in the presence of a proton gradient across the membrane. The alpha chain is a regulatory subunit. This is ATP synthase subunit alpha from Mycoplasma genitalium (strain ATCC 33530 / DSM 19775 / NCTC 10195 / G37) (Mycoplasmoides genitalium).